The following is a 330-amino-acid chain: 4-hydroxythreonine-4-phosphate dehydrogenase (330 aa).

Positions 136 and 137 each coordinate substrate. The a divalent metal cation site is built by histidine 166, histidine 211, and histidine 266. The substrate site is built by lysine 274, asparagine 283, and arginine 292.

It belongs to the PdxA family. Homodimer. Requires Zn(2+) as cofactor. The cofactor is Mg(2+). Co(2+) is required as a cofactor.

The protein localises to the cytoplasm. The catalysed reaction is 4-(phosphooxy)-L-threonine + NAD(+) = 3-amino-2-oxopropyl phosphate + CO2 + NADH. It functions in the pathway cofactor biosynthesis; pyridoxine 5'-phosphate biosynthesis; pyridoxine 5'-phosphate from D-erythrose 4-phosphate: step 4/5. Catalyzes the NAD(P)-dependent oxidation of 4-(phosphooxy)-L-threonine (HTP) into 2-amino-3-oxo-4-(phosphooxy)butyric acid which spontaneously decarboxylates to form 3-amino-2-oxopropyl phosphate (AHAP). The protein is 4-hydroxythreonine-4-phosphate dehydrogenase of Sodalis glossinidius (strain morsitans).